Here is a 355-residue protein sequence, read N- to C-terminus: Uroporphyrinogen decarboxylase (355 aa).

Substrate-binding positions include 27–31 (RQAGR), Asp-78, Tyr-155, Ser-210, and His-328.

This sequence belongs to the uroporphyrinogen decarboxylase family. In terms of assembly, homodimer.

The protein resides in the cytoplasm. The catalysed reaction is uroporphyrinogen III + 4 H(+) = coproporphyrinogen III + 4 CO2. It participates in porphyrin-containing compound metabolism; protoporphyrin-IX biosynthesis; coproporphyrinogen-III from 5-aminolevulinate: step 4/4. Its function is as follows. Catalyzes the decarboxylation of four acetate groups of uroporphyrinogen-III to yield coproporphyrinogen-III. This is Uroporphyrinogen decarboxylase from Ectopseudomonas mendocina (strain ymp) (Pseudomonas mendocina).